The sequence spans 1313 residues: Inactive protein tyrosine kinase pTKL (1313 aa).

MORN repeat units lie at residues 20-42 and 45-63; these read YAGD…ENGN and FGHF…IDKN. N-linked (GlcNAc...) asparagine glycans are attached at residues Asn63, Asn131, Asn178, Asn208, Asn254, Asn260, and Asn288. One can recognise an SAM domain in the interval 300-365; that stretch reads WNKEQVAQWL…LQLIKNLRVT (66 aa). 5 N-linked (GlcNAc...) asparagine glycosylation sites follow: Asn466, Asn516, Asn525, Asn528, and Asn534. Residues 569-580 are compositionally biased toward basic and acidic residues; that stretch reads EPIKPNKEKEEN. Residues 569–631 are disordered; it reads EPIKPNKEKE…SEKSSETSSE (63 aa). Residues 586-604 are compositionally biased toward polar residues; it reads PIINSKNETNLLNDSNPTK. N-linked (GlcNAc...) asparagine glycans are attached at residues Asn592, Asn598, Asn661, Asn678, Asn729, Asn735, and Asn749. An ATP-binding site is contributed by Lys782. N-linked (GlcNAc...) asparagine glycosylation is found at Asn790, Asn868, Asn940, Asn983, and Asn1000. Residues 962–1294 form the Protein kinase domain; sequence FRNKNNILCG…FDRILIEISM (333 aa). An RVxF motif motif is present at residues 1052–1055; the sequence is KILF. N-linked (GlcNAc...) asparagine glycans are attached at residues Asn1191 and Asn1198.

The protein belongs to the protein kinase superfamily. TKL Ser/Thr protein kinase family.

The protein localises to the parasitophorous vacuole. Its subcellular location is the host cell membrane. It is found in the host cytoplasm. The protein resides in the host cytoskeleton. This Plasmodium berghei (strain Anka) protein is Inactive protein tyrosine kinase pTKL.